Here is a 202-residue protein sequence, read N- to C-terminus: Recombination protein RecR (202 aa).

The segment at 57–72 (CGVCRTFTEQPCCDIC) adopts a C4-type zinc-finger fold. The Toprim domain maps to 81–176 (GQICVVESPS…STTKIAHGVP (96 aa)).

This sequence belongs to the RecR family.

Its function is as follows. May play a role in DNA repair. It seems to be involved in an RecBC-independent recombinational process of DNA repair. It may act with RecF and RecO. In Hamiltonella defensa subsp. Acyrthosiphon pisum (strain 5AT), this protein is Recombination protein RecR.